Here is a 161-residue protein sequence, read N- to C-terminus: RuBisCO chaperone RbcX (161 aa).

Disordered stretches follow at residues 1–20 (MQFMGTASRMASTQRAKPME) and 130–161 (LGAEPSLPETEVSDRPSDSATPDDASNASHAD). Polar residues predominate over residues 147–161 (DSATPDDASNASHAD).

This sequence belongs to the RbcX family. In terms of assembly, homodimer. Interacts with the exposed C-terminal peptide of endogenous RbcL ('Lys-460-Asp-470') via its central cleft, as well as C-terminal peptides from other cyanobacterial RbcL. Contacts a second RbcL monomer via its peripheral polar surface.

It localises to the carboxysome. Its subcellular location is the cytoplasm. An RbcL-specific chaperone. The central cleft of the RbcX homodimer (RbcX2) binds the C-terminus of an RbcL monomer, stabilizing the C-terminus and probably preventing its reassociation with chaperonin GroEL-ES. At the same time the peripheral region of RbcX2 binds a second RbcL monomer, bridging the RbcL homodimers in the correct orientation. The RbcX2(2)-bound RbcL dimers then assemble into the RbcL8 core (RbcL8-(RbcX2)8). RbcS binding triggers the release of RbcX2. The protein is RuBisCO chaperone RbcX of Synechococcus sp. (strain ATCC 27144 / PCC 6301 / SAUG 1402/1) (Anacystis nidulans).